The following is a 273-amino-acid chain: MTIKNVIFSLFILAILAETVFSQNCMDTSCPGLKECCSRWGFCGTKDEYCGFFCFSGPCNIKGKSYGYDYNVDAGPRGKIETVITSALFDSIMSKVESNCSAKGFYTYEAFITAFKSFGAYKGKVAKREIAAILAHFSYGSKSFCYKEEISNERYCSKSKKYPCEPGKNYYGRGLLQSITWNEYYGAGKHLGLPLLKDPDLVSRSPEVAFKFAMWFWNRNVRPALYLGFGEITKRVDGRECGNWRRDDTKNKVKQYIEFCEMLGVTPDQGLDC.

Positions 1 to 22 are cleaved as a signal peptide; it reads MTIKNVIFSLFILAILAETVFS. The Chitin-binding type-1 domain occupies 23-61; it reads QNCMDTSCPGLKECCSRWGFCGTKDEYCGFFCFSGPCNI. 4 disulfides stabilise this stretch: Cys25/Cys37, Cys30/Cys43, Cys36/Cys50, and Cys54/Cys59. Residues 78-273 are catalytic; that stretch reads GKIETVITSA…GVTPDQGLDC (196 aa). Asn99 carries N-linked (GlcNAc...) asparagine glycosylation.

This sequence belongs to the glycosyl hydrolase 19 family. Chitinase class I subfamily.

This Arabidopsis thaliana (Mouse-ear cress) protein is Inactive endochitinase At2g43600.